We begin with the raw amino-acid sequence, 239 residues long: Uridylate kinase (239 aa).

13–16 serves as a coordination point for ATP; the sequence is KISG. Residue glycine 55 coordinates UMP. Residues glycine 56 and arginine 60 each contribute to the ATP site. UMP is bound by residues aspartate 75 and 136–143; that span reads LGIPFFTT. ATP is bound by residues threonine 163, tyrosine 169, and aspartate 172.

The protein belongs to the UMP kinase family. In terms of assembly, homohexamer.

The protein localises to the cytoplasm. The enzyme catalyses UMP + ATP = UDP + ADP. It functions in the pathway pyrimidine metabolism; CTP biosynthesis via de novo pathway; UDP from UMP (UMPK route): step 1/1. Its activity is regulated as follows. Inhibited by UTP. Catalyzes the reversible phosphorylation of UMP to UDP. The polypeptide is Uridylate kinase (Buchnera aphidicola subsp. Cinara cedri (strain Cc)).